A 154-amino-acid chain; its full sequence is Myoglobin (154 aa).

One can recognise a Globin domain in the interval 2–148 (GLSDGEWTLV…FRNDMAAQYK (147 aa)). Serine 4 is modified (phosphoserine). Histidine 65 contacts nitrite. Histidine 65 is a binding site for O2. Threonine 68 carries the phosphothreonine modification. Heme b is bound at residue histidine 94.

Belongs to the globin family. As to quaternary structure, monomeric.

It is found in the cytoplasm. Its subcellular location is the sarcoplasm. It catalyses the reaction Fe(III)-heme b-[protein] + nitric oxide + H2O = Fe(II)-heme b-[protein] + nitrite + 2 H(+). The enzyme catalyses H2O2 + AH2 = A + 2 H2O. Functionally, monomeric heme protein which primary function is to store oxygen and facilitate its diffusion within muscle tissues. Reversibly binds oxygen through a pentacoordinated heme iron and enables its timely and efficient release as needed during periods of heightened demand. Depending on the oxidative conditions of tissues and cells, and in addition to its ability to bind oxygen, it also has a nitrite reductase activity whereby it regulates the production of bioactive nitric oxide. Under stress conditions, like hypoxia and anoxia, it also protects cells against reactive oxygen species thanks to its pseudoperoxidase activity. This is Myoglobin from Capra hircus (Goat).